Here is a 92-residue protein sequence, read N- to C-terminus: C-C motif chemokine 3 (92 aa).

Residues 1–19 (MKVPGAALAVLLCTMSLCS) form the signal peptide. Intrachain disulfides connect Cys33-Cys57 and Cys34-Cys73.

It belongs to the intercrine beta (chemokine CC) family. As to quaternary structure, self-associates. Also heterodimer of MIP-1-alpha(4-69) and MIP-1-beta(3-69). Interacts with CCR1.

It localises to the secreted. Its function is as follows. Monokine with inflammatory and chemokinetic properties. Binds to CCR1, CCR4 and CCR5. One of the major HIV-suppressive factors produced by CD8+ T-cells. Recombinant MIP-1-alpha induces a dose-dependent inhibition of different strains of HIV-1, HIV-2, and simian immunodeficiency virus (SIV). This is C-C motif chemokine 3 (CCL3) from Canis lupus familiaris (Dog).